Here is a 595-residue protein sequence, read N- to C-terminus: Protein LUTEIN DEFICIENT 5, chloroplastic (595 aa).

The transit peptide at 1 to 28 (MAMAFPLSYTPTITVKPVTYSRRSNFVV) directs the protein to the chloroplast. Cys516 is a heme binding site.

Belongs to the cytochrome P450 family. Requires heme as cofactor.

The protein localises to the plastid. It localises to the chloroplast. Heme-containing cytochrome P450 involved in the biosynthesis of xanthophylls. Specific for beta-ring hydroxylation of alpha- and beta-carotene. Also has a low activity toward the epsilon-rings of alpha-carotene. The beta-ring of alpha-carotene is the preferred substrate in planta. The protein is Protein LUTEIN DEFICIENT 5, chloroplastic (CYP97A3) of Arabidopsis thaliana (Mouse-ear cress).